We begin with the raw amino-acid sequence, 174 residues long: Small ribosomal subunit protein uS5 (174 aa).

The S5 DRBM domain maps to 17-80 (WQERVVQIRR…ADGKKHLIDV (64 aa)).

Belongs to the universal ribosomal protein uS5 family. As to quaternary structure, part of the 30S ribosomal subunit. Contacts proteins S4 and S8.

In terms of biological role, with S4 and S12 plays an important role in translational accuracy. Functionally, located at the back of the 30S subunit body where it stabilizes the conformation of the head with respect to the body. In Thermosynechococcus vestitus (strain NIES-2133 / IAM M-273 / BP-1), this protein is Small ribosomal subunit protein uS5.